Consider the following 174-residue polypeptide: NADPH-dependent 7-cyano-7-deazaguanine reductase (174 aa).

Catalysis depends on cysteine 72, which acts as the Thioimide intermediate. Aspartate 79 (proton donor) is an active-site residue. Substrate is bound by residues 94–96 (VES) and 113–114 (HE).

This sequence belongs to the GTP cyclohydrolase I family. QueF type 1 subfamily.

It localises to the cytoplasm. It catalyses the reaction 7-aminomethyl-7-carbaguanine + 2 NADP(+) = 7-cyano-7-deazaguanine + 2 NADPH + 3 H(+). Its pathway is tRNA modification; tRNA-queuosine biosynthesis. Its function is as follows. Catalyzes the NADPH-dependent reduction of 7-cyano-7-deazaguanine (preQ0) to 7-aminomethyl-7-deazaguanine (preQ1). The protein is NADPH-dependent 7-cyano-7-deazaguanine reductase of Synechococcus elongatus (strain ATCC 33912 / PCC 7942 / FACHB-805) (Anacystis nidulans R2).